Here is an 85-residue protein sequence, read N- to C-terminus: Neurotoxin BmKAEP2 (85 aa).

An N-terminal signal peptide occupies residues 1–21; sequence MKLFLLLVISASMLIDGLVNA. The 61-residue stretch at 22–82 folds into the LCN-type CS-alpha/beta domain; it reads DGYIRGSNGC…TWKSESNTCG (61 aa). Intrachain disulfides connect Cys31–Cys81, Cys35–Cys56, Cys42–Cys63, and Cys46–Cys65.

Belongs to the long (4 C-C) scorpion toxin superfamily. Sodium channel inhibitor family. Beta subfamily. In terms of tissue distribution, expressed by the venom gland.

The protein resides in the secreted. Depressant insect beta-toxins cause a transient contraction paralysis followed by a slow flaccid paralysis. They bind voltage-independently at site-4 of sodium channels (Nav) and shift the voltage of activation toward more negative potentials thereby affecting sodium channel activation and promoting spontaneous and repetitive firing. This toxin is active only on insects. Has potential anti-epilepsy effect. The polypeptide is Neurotoxin BmKAEP2 (Olivierus martensii (Manchurian scorpion)).